A 148-amino-acid polypeptide reads, in one-letter code: uncharacterized protein (148 aa).

Its subcellular location is the plastid. It localises to the chloroplast. This is an uncharacterized protein from Porphyra purpurea (Red seaweed).